A 234-amino-acid polypeptide reads, in one-letter code: Sperm flagellar protein 1 (234 aa).

The Calponin-homology (CH) domain occupies 7-112 (EEALHQLYLW…VLIPLRQRLE (106 aa)). An essential for homodimerization and microtubule bundling activity region spans residues 181-234 (VLQIAEKEQELLASQETVQVLQMKVKRLEHLLQLKNVRIDDLSRRLQQAERKQR).

In terms of assembly, homodimer. Interacts with actin, TJP1, CGN and CDH1. As to expression, expressed predominantly in the seminiferous epithelium of adult testis. Expressed in pillar cells of the organ of Corti (at protein level). Expressed in brain, kidney, lung and testis. Highly expressed in the trachea, lung and oviduct.

The protein localises to the cytoplasm. It is found in the cell projection. Its subcellular location is the cilium. It localises to the flagellum. The protein resides in the cytoskeleton. The protein localises to the cilium axoneme. It is found in the apical cell membrane. Its subcellular location is the basolateral cell membrane. It localises to the stress fiber. The protein resides in the microvillus. The protein localises to the lamellipodium. It is found in the filopodium. Its function is as follows. Microtubule-associated protein that promotes microtubule bundling and stabilizes microtubules against depolymerization in response to cold shock. Microtubule-associated protein involved in the stabilization of microtubules along the axis of migration during radial intercalation. Promotes the establishment and stabilization of an axis of microtubules required for the active migration of cells into the outer epithelium. Essential for ciliary central apparatus formation which requires both its microtubule-binding and bundling activities and for ciliary localization of HYDIN and SPAG6 in ependymal cilia. Binds actin in intestinal epithelial cells (IECs), essential for IECs survival and contributes to formation of filopodia and lamellipodia in migrating IECs. Regulates planar cell polarity signaling pathway and asymmetric microtubule accumulation in ciliated epithelia. The chain is Sperm flagellar protein 1 (Spef1) from Mus musculus (Mouse).